A 321-amino-acid chain; its full sequence is MGEPQGSMRILVTGGSGLVGKAIQKVVADGAGLPGEDWVFVSSKDADLTDAAQTRALLEKVRPTHVIHLAAMVGGLFRNIKYNLDFWRKNVHINDNVLHSAFEVGARKVVSCLSTCIFPDKTTYPIDETMIHNGPPHSSNFGYSYVKRMIDVQNRAYFQQYGCTFTAVIPTNVFGPHDNFNIEDGHVLPGLIHKVHLAKSSGSALTVWGTGKPRRQFIYSLDLAQLFIWVLREYNEVEPIILSVGEDDEVSIKEAAEAVVEAMDFHGEVTFDTTKSDGQFKKTASNSKLRTYLPDFRFTPFKQAVKETCAWFTDNYEQARK.

14–20 is an NADP(+) binding site; that stretch reads GGSGLVG. The active-site Proton donor/acceptor is Y143. Residues K147, 170–173, and H186 each bind NADP(+); that span reads PTNV. Residues K194, W208, R215, and D277 each contribute to the substrate site.

This sequence belongs to the NAD(P)-dependent epimerase/dehydratase family. Fucose synthase subfamily. Homodimer.

It carries out the reaction GDP-beta-L-fucose + NADP(+) = GDP-4-dehydro-alpha-D-rhamnose + NADPH + H(+). It participates in nucleotide-sugar biosynthesis; GDP-L-fucose biosynthesis via de novo pathway; GDP-L-fucose from GDP-alpha-D-mannose: step 2/2. Catalyzes the two-step NADP-dependent conversion of GDP-4-dehydro-6-deoxy-D-mannose to GDP-fucose, involving an epimerase and a reductase reaction. This chain is GDP-L-fucose synthase (GFUS), found in Pongo abelii (Sumatran orangutan).